Here is a 120-residue protein sequence, read N- to C-terminus: Large ribosomal subunit protein uL18 (120 aa).

The tract at residues 1 to 26 (MSKAKVTNARRKRSVRLKLRRSGGGR) is disordered. Residues 8–23 (NARRKRSVRLKLRRSG) are compositionally biased toward basic residues.

This sequence belongs to the universal ribosomal protein uL18 family. Part of the 50S ribosomal subunit; part of the 5S rRNA/L5/L18/L25 subcomplex. Contacts the 5S and 23S rRNAs.

In terms of biological role, this is one of the proteins that bind and probably mediate the attachment of the 5S RNA into the large ribosomal subunit, where it forms part of the central protuberance. The polypeptide is Large ribosomal subunit protein uL18 (Bradyrhizobium diazoefficiens (strain JCM 10833 / BCRC 13528 / IAM 13628 / NBRC 14792 / USDA 110)).